The following is a 309-amino-acid chain: Carbamate kinase (309 aa).

It belongs to the carbamate kinase family.

The protein resides in the cytoplasm. The catalysed reaction is hydrogencarbonate + NH4(+) + ATP = carbamoyl phosphate + ADP + H2O + H(+). Its pathway is metabolic intermediate metabolism; carbamoyl phosphate degradation; CO(2) and NH(3) from carbamoyl phosphate: step 1/1. In Staphylococcus haemolyticus (strain JCSC1435), this protein is Carbamate kinase (arcC).